Reading from the N-terminus, the 2554-residue chain is DnaJ homolog subfamily C GRV2 (2554 aa).

Disordered stretches follow at residues 746–766 (DVVDDTDQEGSSTNRRQKRLL) and 810–833 (QRRAADSSSEASNPQASAFPGVDS). Positions 815 to 825 (DSSSEASNPQA) are enriched in polar residues. 2 coiled-coil regions span residues 925–951 (TRQELIEALKAEVHNLDVEKERTEDIS) and 1518–1546 (RTASVELNEEISNISKQIQNLDEEKLKRQ). A J domain is found at 1524–1606 (LNEEISNISK…AQCILYRRYG (83 aa)). Disordered stretches follow at residues 1960–1994 (IEDRNSSNDTPELQSSVAEPSLIEEHSDHQPSSEG) and 2339–2366 (SGEVKAEEIGSDGVNESTDPSSLPGQTP). A compositionally biased stretch (polar residues) spans 1966 to 1977 (SNDTPELQSSVA). The span at 1982 to 1994 (IEEHSDHQPSSEG) shows a compositional bias: basic and acidic residues. Positions 2352–2366 (VNESTDPSSLPGQTP) are enriched in polar residues.

Constitutively expressed in roots, hypocotyls, leaves (e.g. vascular tissues), stems, flowers (e.g. petals and stigmas), siliques and pollen.

It is found in the endosome membrane. Required for endosome formation, vacuolar protein sorting and determination of the embryo growth axis. Necessary for the transport of proteins into protein storage vacuoles (PSVs). Participates in vesicle trafficking from the endosome to the central vacuole. Involved in the regulation of shoot phototropism and gravitropism, probably through the positioning of specialized amyloplasts (statoliths) in endodermal cells. This Arabidopsis thaliana (Mouse-ear cress) protein is DnaJ homolog subfamily C GRV2 (GRV2).